The sequence spans 268 residues: Eukaryotic translation initiation factor 3 subunit J (268 aa).

Disordered stretches follow at residues 1–27, 40–63, and 217–249; these read MSWDDEEFEVRTSTKDQPMVVSWDDEF, DAEEVPKQKQKPKAAPKAAKKVDK, and LAKVKGGTATGGAGKKKAKAARPNLGGAFKKDQ. The span at 47-58 shows a compositional bias: basic residues; sequence QKQKPKAAPKAA. Residues 191-221 are a coiled coil; the sequence is IESIRQTVATLNVLIKEKERQERQARLAKVK.

The protein belongs to the eIF-3 subunit J family. As to quaternary structure, component of the eukaryotic translation initiation factor 3 (eIF-3) complex.

The protein localises to the cytoplasm. Functionally, component of the eukaryotic translation initiation factor 3 (eIF-3) complex, which is involved in protein synthesis of a specialized repertoire of mRNAs and, together with other initiation factors, stimulates binding of mRNA and methionyl-tRNAi to the 40S ribosome. The eIF-3 complex specifically targets and initiates translation of a subset of mRNAs involved in cell proliferation. This chain is Eukaryotic translation initiation factor 3 subunit J, found in Eremothecium gossypii (strain ATCC 10895 / CBS 109.51 / FGSC 9923 / NRRL Y-1056) (Yeast).